Reading from the N-terminus, the 217-residue chain is Thiamine-phosphate synthase (217 aa).

Residues Q38–K42 and N70 each bind 4-amino-2-methyl-5-(diphosphooxymethyl)pyrimidine. Positions 71 and 90 each coordinate Mg(2+). Residue S109 coordinates 4-amino-2-methyl-5-(diphosphooxymethyl)pyrimidine. Residue S136–T138 participates in 2-[(2R,5Z)-2-carboxy-4-methylthiazol-5(2H)-ylidene]ethyl phosphate binding. K139 lines the 4-amino-2-methyl-5-(diphosphooxymethyl)pyrimidine pocket. G166 contributes to the 2-[(2R,5Z)-2-carboxy-4-methylthiazol-5(2H)-ylidene]ethyl phosphate binding site.

The protein belongs to the thiamine-phosphate synthase family. The cofactor is Mg(2+).

It carries out the reaction 2-[(2R,5Z)-2-carboxy-4-methylthiazol-5(2H)-ylidene]ethyl phosphate + 4-amino-2-methyl-5-(diphosphooxymethyl)pyrimidine + 2 H(+) = thiamine phosphate + CO2 + diphosphate. The enzyme catalyses 2-(2-carboxy-4-methylthiazol-5-yl)ethyl phosphate + 4-amino-2-methyl-5-(diphosphooxymethyl)pyrimidine + 2 H(+) = thiamine phosphate + CO2 + diphosphate. The catalysed reaction is 4-methyl-5-(2-phosphooxyethyl)-thiazole + 4-amino-2-methyl-5-(diphosphooxymethyl)pyrimidine + H(+) = thiamine phosphate + diphosphate. It participates in cofactor biosynthesis; thiamine diphosphate biosynthesis; thiamine phosphate from 4-amino-2-methyl-5-diphosphomethylpyrimidine and 4-methyl-5-(2-phosphoethyl)-thiazole: step 1/1. Condenses 4-methyl-5-(beta-hydroxyethyl)thiazole monophosphate (THZ-P) and 2-methyl-4-amino-5-hydroxymethyl pyrimidine pyrophosphate (HMP-PP) to form thiamine monophosphate (TMP). The polypeptide is Thiamine-phosphate synthase (Nitrosococcus oceani (strain ATCC 19707 / BCRC 17464 / JCM 30415 / NCIMB 11848 / C-107)).